The chain runs to 95 residues: High mobility group nucleosome-binding domain-containing protein 3 (95 aa).

Composition is skewed to basic and acidic residues over residues 1-25 (MPKR…EPTR), 39-53 (PEPK…KEPG), and 62-72 (GKKEEKQEAGK). The interval 1 to 95 (MPKRKSPENA…EEVLSTNASH (95 aa)) is disordered. The residue at position 6 (Ser6) is a Phosphoserine. Ser78 is subject to Phosphoserine.

Belongs to the HMGN family. In terms of assembly, interacts with the ligand binding domain of the thyroid receptor (TR) (in vitro). Requires the presence of thyroid hormone for its interaction. Interacts with transcriptional regulator SEHBP. Interacts with nucleosomes.

The protein localises to the nucleus. Functionally, binds to nucleosomes, regulating chromatin structure and consequently, chromatin-dependent processes such as transcription, DNA replication and DNA repair. Affects both insulin and glucagon levels and modulates the expression of pancreatic genes involved in insulin secretion. Regulates the expression of the glucose transporter SLC2A2 by binding specifically to its promoter region and recruiting PDX1 and additional transcription factors. Regulates the expression of SLC6A9, a glycine transporter which regulates the glycine concentration in synaptic junctions in the central nervous system, by binding to its transcription start site. May play a role in ocular development and astrocyte function. This chain is High mobility group nucleosome-binding domain-containing protein 3 (Hmgn3), found in Rattus norvegicus (Rat).